Consider the following 411-residue polypeptide: MATLSSYLLSSPPLCKSRFSATSLVSGIDFISFSPRTTLSSSSTVLPAILSLSVKHNRRRNSLQVKSVASPTETISEFDEMVSGTKRKYYMLGGKGGVGKTSCAASLAVRFANNGHPTLVVSTDPAHSLSDSFAQDLTGGMLVPVEGPEAPLFALEINPEKAREEFRSASQMNGGTGVKDFMDGMGLGMLVEQLGELKLGELLDTPPPGLDEAIAISKVIQFLESPEYNMFTRIVFDTAPTGHTLRLLSLPDFLDASIGKILKLRQKITSATSAIKSVFGKEEKGPDAADKLEKLRERMVKVRELFRDTESTEFVIVTIPTVMAVSESSRLSASLKKESVPVKRLIVNQLLPPSSSDCKFCSIKRKDQMRALDMIREDSELSALTLMEAPLVDMEIRGVPALRFLGDIIWK.

The transit peptide at 1–67 directs the protein to the chloroplast; it reads MATLSSYLLS…RRRNSLQVKS (67 aa). 95 to 102 is an ATP binding site; it reads KGGVGKTS. Residue Asp124 is part of the active site. Residue Asn348 participates in ATP binding.

Belongs to the arsA ATPase family.

The protein localises to the plastid. The protein resides in the chloroplast stroma. The enzyme catalyses ATP + H2O = ADP + phosphate + H(+). The protein is ATPase GET3B of Arabidopsis thaliana (Mouse-ear cress).